A 335-amino-acid chain; its full sequence is Galactinol synthase 2 (335 aa).

Lysine 103 is an active-site residue. Mn(2+)-binding residues include aspartate 119, aspartate 121, and histidine 257.

It belongs to the glycosyltransferase 8 family. Galactosyltransferase subfamily. The cofactor is a divalent metal cation. In terms of tissue distribution, accumulates in mature seeds.

It is found in the cytoplasm. The catalysed reaction is myo-inositol + UDP-alpha-D-galactose = alpha-D-galactosyl-(1-&gt;3)-1D-myo-inositol + UDP + H(+). Galactinol synthase involved in the biosynthesis of raffinose family oligosaccharides (RFOs) that function as osmoprotectants. Promotes stress tolerance of factors such as drought, chilling, salinity and methylviologen (MV), a superoxide radical generating drug, by mediating an increase in levels of the endogenous osmoprotective compounds, galactinol and raffinose. The chain is Galactinol synthase 2 (GOLS2) from Arabidopsis thaliana (Mouse-ear cress).